Here is a 127-residue protein sequence, read N- to C-terminus: Large ribosomal subunit protein bL12 (127 aa).

Belongs to the bacterial ribosomal protein bL12 family. As to quaternary structure, homodimer. Part of the ribosomal stalk of the 50S ribosomal subunit. Forms a multimeric L10(L12)X complex, where L10 forms an elongated spine to which 2 to 4 L12 dimers bind in a sequential fashion. Binds GTP-bound translation factors.

Its function is as follows. Forms part of the ribosomal stalk which helps the ribosome interact with GTP-bound translation factors. Is thus essential for accurate translation. The chain is Large ribosomal subunit protein bL12 from Sinorhizobium fredii (strain NBRC 101917 / NGR234).